The chain runs to 253 residues: TasA anchoring/assembly protein (253 aa).

A signal peptide spans 1–32 (MFRLFHNQQKAKTKLKVLLIFQLSVIFSLTAA). The tract at residues 50-57 (TFDVSLQT) is important for TasA fiber formation. The span at 190-241 (EKPTVPKKETKSDVKKENETTQKDIPEKTMKEETSQEAVTKEKETQSDQKES) shows a compositional bias: basic and acidic residues. Positions 190 to 253 (EKPTVPKKET…EDEKSNEADQ (64 aa)) are disordered.

The protein localises to the secreted. It is found in the cell wall. Functionally, required for biofilm formation. Required for the proper anchoring and polymerization of TasA amyloid fibers at the cell surface. Is also a minor component of TasA fibers. The protein is TasA anchoring/assembly protein of Bacillus subtilis (strain 168).